A 118-amino-acid polypeptide reads, in one-letter code: Large ribosomal subunit protein bL20 (118 aa).

The protein belongs to the bacterial ribosomal protein bL20 family.

Functionally, binds directly to 23S ribosomal RNA and is necessary for the in vitro assembly process of the 50S ribosomal subunit. It is not involved in the protein synthesizing functions of that subunit. The sequence is that of Large ribosomal subunit protein bL20 from Bacillus cytotoxicus (strain DSM 22905 / CIP 110041 / 391-98 / NVH 391-98).